Consider the following 1377-residue polypeptide: DNA-directed RNA polymerase subunit beta (1377 aa).

This sequence belongs to the RNA polymerase beta chain family. In terms of assembly, the RNAP catalytic core consists of 2 alpha, 1 beta, 1 beta' and 1 omega subunit. When a sigma factor is associated with the core the holoenzyme is formed, which can initiate transcription.

The catalysed reaction is RNA(n) + a ribonucleoside 5'-triphosphate = RNA(n+1) + diphosphate. DNA-dependent RNA polymerase catalyzes the transcription of DNA into RNA using the four ribonucleoside triphosphates as substrates. This is DNA-directed RNA polymerase subunit beta from Cereibacter sphaeroides (strain ATCC 17029 / ATH 2.4.9) (Rhodobacter sphaeroides).